The chain runs to 240 residues: Probable septum site-determining protein MinC (240 aa).

Belongs to the MinC family. In terms of assembly, interacts with MinD and FtsZ.

Its function is as follows. Cell division inhibitor that blocks the formation of polar Z ring septums. Rapidly oscillates between the poles of the cell to destabilize FtsZ filaments that have formed before they mature into polar Z rings. Prevents FtsZ polymerization. The chain is Probable septum site-determining protein MinC from Acinetobacter baumannii (strain ATCC 17978 / DSM 105126 / CIP 53.77 / LMG 1025 / NCDC KC755 / 5377).